The following is a 175-amino-acid chain: Adenine phosphoribosyltransferase (175 aa).

It belongs to the purine/pyrimidine phosphoribosyltransferase family. Homodimer.

Its subcellular location is the cytoplasm. The catalysed reaction is AMP + diphosphate = 5-phospho-alpha-D-ribose 1-diphosphate + adenine. It participates in purine metabolism; AMP biosynthesis via salvage pathway; AMP from adenine: step 1/1. In terms of biological role, catalyzes a salvage reaction resulting in the formation of AMP, that is energically less costly than de novo synthesis. The polypeptide is Adenine phosphoribosyltransferase (Clavibacter michiganensis subsp. michiganensis (strain NCPPB 382)).